Consider the following 472-residue polypeptide: MKPVIALVGRPNVGKSTLFNRMTRSRDAIVANLPGLTRDRKYGEGELEGKHYIVVDTGGITGEEQGIDAAMAGQSFTAMNEADVVLFVVDAQAGVTPADEMIAKELRVRGKPTILVVNKIDGMQPEVAAADFFAMGFQEYMYTAAAHNRGVRSLLEKALEPFPEQEPLEGEDDSGIRIGIIGRPNVGKSTLVNRLLGEDRVVVFDQPGTTRDSVYIPYERLGERYTLIDTAGVRRRKNVSEAVEKFSIVKTLQAIKDAHVVVLVLDAREGIVDQDLHLLGFAIEAGRALVLAINKWDGMSQDDKDEVRREIDRRMGFVEYAQIHFISALHGTGVGHLYESVHECFDSAMAKWSTNQLTTLLEDAVSQHQPPMVNGRRIKLRYAHQGGSNPPLIIVHGNQTDALPNSYKRYLENTFRKVLKVVGTPIRFEFRSGENPFAGKKNKLSPRQQKKKERLMKHVKKLKHKQKRKKSR.

EngA-type G domains follow at residues 3-166 (PVIA…PEQE) and 176-349 (IRIG…DSAM). Residues 9 to 16 (GRPNVGKS), 56 to 60 (DTGGI), 118 to 121 (NKID), 182 to 189 (GRPNVGKS), 229 to 233 (DTAGV), and 294 to 297 (NKWD) contribute to the GTP site. Residues 350–434 (AKWSTNQLTT…PIRFEFRSGE (85 aa)) enclose the KH-like domain. Residues 433–472 (GENPFAGKKNKLSPRQQKKKERLMKHVKKLKHKQKRKKSR) form a disordered region. Positions 440-472 (KKNKLSPRQQKKKERLMKHVKKLKHKQKRKKSR) are enriched in basic residues.

This sequence belongs to the TRAFAC class TrmE-Era-EngA-EngB-Septin-like GTPase superfamily. EngA (Der) GTPase family. In terms of assembly, associates with the 50S ribosomal subunit.

Its function is as follows. GTPase that plays an essential role in the late steps of ribosome biogenesis. The chain is GTPase Der from Hahella chejuensis (strain KCTC 2396).